Consider the following 145-residue polypeptide: D-aminoacyl-tRNA deacylase (145 aa).

Residues 137-138 (GP) carry the Gly-cisPro motif, important for rejection of L-amino acids motif.

This sequence belongs to the DTD family. In terms of assembly, homodimer.

It localises to the cytoplasm. The catalysed reaction is glycyl-tRNA(Ala) + H2O = tRNA(Ala) + glycine + H(+). It carries out the reaction a D-aminoacyl-tRNA + H2O = a tRNA + a D-alpha-amino acid + H(+). Functionally, an aminoacyl-tRNA editing enzyme that deacylates mischarged D-aminoacyl-tRNAs. Also deacylates mischarged glycyl-tRNA(Ala), protecting cells against glycine mischarging by AlaRS. Acts via tRNA-based rather than protein-based catalysis; rejects L-amino acids rather than detecting D-amino acids in the active site. By recycling D-aminoacyl-tRNA to D-amino acids and free tRNA molecules, this enzyme counteracts the toxicity associated with the formation of D-aminoacyl-tRNA entities in vivo and helps enforce protein L-homochirality. In Francisella tularensis subsp. novicida (strain U112), this protein is D-aminoacyl-tRNA deacylase.